The following is a 72-amino-acid chain: Crustacean hyperglycemic hormone (72 aa).

Gln1 is subject to Pyrrolidone carboxylic acid. Phe3 carries the D-phenylalanine modification. Cystine bridges form between Cys7–Cys43, Cys23–Cys39, and Cys26–Cys52. Val72 is modified (valine amide).

Produced by the medulla terminalis X-organ in the eyestalks and transported to the sinus gland where they are stored and released.

The protein resides in the secreted. Hormone found in the sinus gland of isopods and decapods which controls the blood sugar level. Has a secretagogue action over the amylase released from the midgut gland. May act as a stress hormone and may be involved in the control of molting and reproduction. The chain is Crustacean hyperglycemic hormone from Astacus astacus (Noble crayfish).